The sequence spans 545 residues: Cytochrome P450 monooxygenase sdnB (545 aa).

Residue Asn-5 is glycosylated (N-linked (GlcNAc...) asparagine). A helical transmembrane segment spans residues 30-50 (SILALTPLQGIALFLCLFWGY). A glycan (N-linked (GlcNAc...) asparagine) is linked at Asn-276. Residues 322–342 (LPILILIILVPAAHTTAMGIS) form a helical membrane-spanning segment. N-linked (GlcNAc...) asparagine glycans are attached at residues Asn-393 and Asn-476. A heme-binding site is contributed by Cys-486.

This sequence belongs to the cytochrome P450 family. Heme is required as a cofactor.

It is found in the membrane. It participates in antibiotic biosynthesis. Cytochrome P450 monooxygenase; part of the gene cluster that mediates the biosynthesis of sordarin and hypoxysordarin, glycoside antibiotics with a unique tetracyclic diterpene aglycone structure. First, the geranylgeranyl diphosphate synthase sdnC constructs GGDP from farnesyl diphosphate and isopentenyl diphosphate. The diterpene cyclase sdnA then catalyzes the cyclization of GGDP to afford cycloaraneosene. Cycloaraneosene is then hydroxylated four times by the putative cytochrome P450 monooxygenases sdnB, sdnE, sdnF and sdnH to give a hydroxylated cycloaraneosene derivative such as cycloaraneosene-8,9,13,19-tetraol. Although the order of the hydroxylations is unclear, at least C8, C9 and C13 of the cycloaraneosene skeleton are hydroxylated before the sordaricin formation. Dehydration of the 13-hydroxy group of the hydroxylated cycloaraneosene derivative might be catalyzed by an unassigned hypothetical protein such as sdnG and sdnP to construct the cyclopentadiene moiety. The FAD-dependent oxidoreductase sdnN is proposed to catalyze the oxidation at C9 of the hydroxylated cycloaraneosene derivative and also catalyze the Baeyer-Villiger oxidation to give the lactone intermediate. The presumed lactone intermediate would be hydrolyzed to give an acrolein moiety and a carboxylate moiety. Then, [4+2]cycloaddition would occur between the acrolein moiety and the cyclopentadiene moiety to give sordaricin. SdnN might also be involved in the [4+2]cycloaddition after the hypothesized oxidation to accommodate the oxidized product and prompt the [4+2]cycloaddition. GDP-6-deoxy-D-altrose may be biosynthesized from GDP-D-mannose by the putative GDP-mannose-4,6-dehydratase sdnI and the short-chain dehydrogenase sdnK. The glycosyltransferase sdnJ catalyzes the attachment of 6-deoxy-D-altrose onto the 19-hydroxy group of sordaricin to give 4'-O-demethylsordarin. The methyltransferase sdnD would complete the biosynthesis of sordarin. Sordarin can be further modified into hypoxysordarin. The unique acyl chain at the 3'-hydroxy group of hypoxysordarin would be constructed by an iterative type I PKS sdnO and the trans-acting polyketide methyltransferase sdnL. SdnL would be responsible for the introduction of an alpha-methyl group of the polyketide chain. Alternatively, the beta-lactamase-like protein sdnR might be responsible for the cleavage and transfer of the polyketide chain from the PKS sdnO to sordarin. Two putative cytochrome P450 monooxygenases, sdnQ and sdnT, might catalyze the epoxidations of the polyketide chain to complete the biosynthesis of hypoxysordarin. Transcriptional regulators sdnM and sdnS are presumably encoded for the transcriptional regulation of the expression of the sdn gene cluster. The chain is Cytochrome P450 monooxygenase sdnB from Sordaria araneosa (Pleurage araneosa).